The primary structure comprises 265 residues: 4-hydroxy-tetrahydrodipicolinate reductase (265 aa).

NAD(+)-binding positions include 7 to 12 (GASGRM) and Asp33. Arg34 lines the NADP(+) pocket. Residues 96–98 (GTT) and 120–123 (ASNF) each bind NAD(+). His153 functions as the Proton donor/acceptor in the catalytic mechanism. His154 serves as a coordination point for (S)-2,3,4,5-tetrahydrodipicolinate. Residue Lys157 is the Proton donor of the active site. 163–164 (GT) lines the (S)-2,3,4,5-tetrahydrodipicolinate pocket.

It belongs to the DapB family.

It localises to the cytoplasm. The enzyme catalyses (S)-2,3,4,5-tetrahydrodipicolinate + NAD(+) + H2O = (2S,4S)-4-hydroxy-2,3,4,5-tetrahydrodipicolinate + NADH + H(+). It carries out the reaction (S)-2,3,4,5-tetrahydrodipicolinate + NADP(+) + H2O = (2S,4S)-4-hydroxy-2,3,4,5-tetrahydrodipicolinate + NADPH + H(+). The protein operates within amino-acid biosynthesis; L-lysine biosynthesis via DAP pathway; (S)-tetrahydrodipicolinate from L-aspartate: step 4/4. Functionally, catalyzes the conversion of 4-hydroxy-tetrahydrodipicolinate (HTPA) to tetrahydrodipicolinate. The sequence is that of 4-hydroxy-tetrahydrodipicolinate reductase from Paraburkholderia phymatum (strain DSM 17167 / CIP 108236 / LMG 21445 / STM815) (Burkholderia phymatum).